The following is an 81-amino-acid chain: Metallocarboxypeptidase inhibitor (81 aa).

An N-terminal signal peptide occupies residues 1–15 (MFLLVFLCCLHLVIS). 4 disulfides stabilise this stretch: Cys25-Cys48, Cys32-Cys76, Cys33-Cys57, and Cys36-Cys72.

In terms of biological role, tightly binding, competitive inhibitor of different types of pancreatic-like carboxypeptidases. Inhibits human CPA4. This is Metallocarboxypeptidase inhibitor from Hirudo medicinalis (Medicinal leech).